Here is a 632-residue protein sequence, read N- to C-terminus: Chaperone protein HtpG (632 aa).

The a; substrate-binding stretch occupies residues 1 to 339; sequence MTQQTMSFQA…SSDLPLNVSR (339 aa). A b region spans residues 340–559; sequence EILQESRDVK…DNDMSGYLQR (220 aa). A c region spans residues 560-632; the sequence is MLKAAGQSAP…TNALLLSRAA (73 aa).

It belongs to the heat shock protein 90 family. In terms of assembly, homodimer.

The protein resides in the cytoplasm. Its function is as follows. Molecular chaperone. Has ATPase activity. In Burkholderia pseudomallei (strain 1106a), this protein is Chaperone protein HtpG.